The sequence spans 451 residues: Gamma-aminobutyric acid receptor subunit alpha-2 (451 aa).

The signal sequence occupies residues 1-28 (MRTKLSTCNVWFPLLVLLVWNPARLVLA). Residues 29–249 (NIQEDEAKNN…MTAHFHLKRK (221 aa)) are Extracellular-facing. A glycan (N-linked (GlcNAc...) asparagine) is linked at asparagine 38. Arginine 94 is a 4-aminobutanoate binding site. Asparagine 114 and asparagine 138 each carry an N-linked (GlcNAc...) asparagine glycan. Threonine 157 serves as a coordination point for 4-aminobutanoate. A disulfide bond links cysteine 166 and cysteine 180. 3 consecutive transmembrane segments (helical) span residues 250 to 270 (IGYFVIQTYLPCIMTVILSQV), 281 to 300 (ARTVFGVTTVLTMTTLSISA), and 312 to 332 (AMDWFIAVCYAFVFSALIEFA). At 333-420 (TVNYFTKRGW…FNSVSKIDRM (88 aa)) the chain is on the cytoplasmic side. Positions 389–408 (KSATTPEPNKKPENKPAEAK) are disordered. Basic and acidic residues predominate over residues 396–408 (PNKKPENKPAEAK). The helical transmembrane segment at 421–441 (SRIVFPVLFGTFNLVYWATYL) threads the bilayer. The Extracellular portion of the chain corresponds to 442 to 451 (NREPVLGVSP).

This sequence belongs to the ligand-gated ion channel (TC 1.A.9) family. Gamma-aminobutyric acid receptor (TC 1.A.9.5) subfamily. GABRA2 sub-subfamily. In terms of assembly, heteropentamer, formed by a combination of alpha (GABRA1-6), beta (GABRB1-3), gamma (GABRG1-3), delta (GABRD), epsilon (GABRE), rho (GABRR1-3), pi (GABRP) and theta (GABRQ) subunits, each subunit exhibiting distinct physiological and pharmacological properties. Binds UBQLN1. Interacts with KIF21B. Interacts with LHFPL4. Interacts with SHISA7; interaction leads to the regulation of GABA(A) receptor trafficking, channel deactivation kinetics and pharmacology. In terms of processing, glycosylated. As to expression, expressed in brain (at protein level).

It is found in the postsynaptic cell membrane. The protein resides in the cell membrane. The protein localises to the cytoplasmic vesicle membrane. It localises to the cell projection. Its subcellular location is the dendrite. The catalysed reaction is chloride(in) = chloride(out). Its activity is regulated as follows. Activated by pentobarbital. Inhibited by the antagonist bicuculline. In terms of biological role, alpha subunit of the heteropentameric ligand-gated chloride channel gated by gamma-aminobutyric acid (GABA), a major inhibitory neurotransmitter in the brain. GABA-gated chloride channels, also named GABA(A) receptors (GABAAR), consist of five subunits arranged around a central pore and contain GABA active binding site(s) located at the alpha and beta subunit interface(s). When activated by GABA, GABAARs selectively allow the flow of chloride anions across the cell membrane down their electrochemical gradient. Chloride influx into the postsynaptic neuron following GABAAR opening decreases the neuron ability to generate a new action potential, thereby reducing nerve transmission. The alpha-2 subunit exhibits synaptogenic activity together with beta-2 and very little to no activity together with beta-3, the gamma-2 subunit being necessary but not sufficient to induce rapid synaptic contacts formation. The chain is Gamma-aminobutyric acid receptor subunit alpha-2 from Rattus norvegicus (Rat).